The following is a 502-amino-acid chain: Cytochrome P450 monooxygenase pyr9 (502 aa).

A helical membrane pass occupies residues 5-25 (EDASIGTVWVTCLLAVGLYFI). N-linked (GlcNAc...) asparagine glycans are attached at residues Asn205, Asn291, and Asn372. Residue Cys437 participates in heme binding.

This sequence belongs to the cytochrome P450 family. It depends on heme as a cofactor.

It localises to the membrane. Its pathway is secondary metabolite biosynthesis; terpenoid biosynthesis. Functionally, cytochrome P450 monooxygenase; part of the gene cluster that mediates the biosynthesis of pyripyropene A, a specific human acyl-coenzyme A:cholesterol acyltransferase 2 inhibitor. The first step of the pathway is the synthesis of nicotinyl-CoA from nicotinic acid by the nicotinic acid-CoA ligase pyr1. Nicotinyl-CoA is then a substrate of polyketide synthase pyr2 to produce 4-hydroxy-6-(3-pyridinyl)-2H-pyran-2-one (HPPO) which is further prenylated by the polyprenyl transferase pyr6 to yield farnesyl-HPPO. The next steps consist of an epoxidation of farnesyl-HPPO to epoxyfarnesyl-HPPO by FAD-dependent monooxygenase pyr5 and a cyclization of the terpenoid portion by the terpene cyclase pyr4 to yield deacetyl-pyripyropene E. The 2 cytochrome P450 monooxygenases pyr3 and pyr9, and the 2 acetyltransferases pyr7 and pyr8 are involved in the conversion of deacetyl-pyripyropene E into pyripyropene A through several cycles of oxidation and acetylation steps. Pyr7 acetylates deacetyl-pyripyropene E to pyripyropene E which is oxidized to 11-deacetyl-pyripyropene O by pyr3, which is in turn acetylated into pyripyropene O by pyr8. Pyripyropene O is then oxidized to deacetyl-pyripyropene A by pyr9. Deacetyl-pyripyropene A is finally acetylated to pyripyropene A by pyr8. The protein is Cytochrome P450 monooxygenase pyr9 of Aspergillus fumigatus (strain ATCC MYA-4609 / CBS 101355 / FGSC A1100 / Af293) (Neosartorya fumigata).